A 303-amino-acid chain; its full sequence is Glycine--tRNA ligase alpha subunit (303 aa).

Belongs to the class-II aminoacyl-tRNA synthetase family. Tetramer of two alpha and two beta subunits.

The protein localises to the cytoplasm. The enzyme catalyses tRNA(Gly) + glycine + ATP = glycyl-tRNA(Gly) + AMP + diphosphate. This Syntrophomonas wolfei subsp. wolfei (strain DSM 2245B / Goettingen) protein is Glycine--tRNA ligase alpha subunit.